Reading from the N-terminus, the 255-residue chain is tRNA (guanine-N(1)-)-methyltransferase (255 aa).

S-adenosyl-L-methionine-binding positions include glycine 113 and 133-138 (IGDYVL).

It belongs to the RNA methyltransferase TrmD family. Homodimer.

It is found in the cytoplasm. It carries out the reaction guanosine(37) in tRNA + S-adenosyl-L-methionine = N(1)-methylguanosine(37) in tRNA + S-adenosyl-L-homocysteine + H(+). Its function is as follows. Specifically methylates guanosine-37 in various tRNAs. This Klebsiella pneumoniae (strain 342) protein is tRNA (guanine-N(1)-)-methyltransferase.